A 137-amino-acid chain; its full sequence is Phosphatidylinositol N-acetylglucosaminyltransferase subunit P (137 aa).

The next 2 membrane-spanning stretches (helical) occupy residues 16–36 and 58–78; these read VYGF…LIWG and MAMP…YIGL.

Belongs to the PIGP family.

The protein resides in the membrane. The enzyme catalyses a 1,2-diacyl-sn-glycero-3-phospho-(1D-myo-inositol) + UDP-N-acetyl-alpha-D-glucosamine = a 6-(N-acetyl-alpha-D-glucosaminyl)-1-(1,2-diacyl-sn-glycero-3-phospho)-1D-myo-inositol + UDP + H(+). It participates in glycolipid biosynthesis; glycosylphosphatidylinositol-anchor biosynthesis. In terms of biological role, part of the complex catalyzing the transfer of N-acetylglucosamine from UDP-N-acetylglucosamine to phosphatidylinositol, the first step of GPI biosynthesis. This Arabidopsis thaliana (Mouse-ear cress) protein is Phosphatidylinositol N-acetylglucosaminyltransferase subunit P.